We begin with the raw amino-acid sequence, 334 residues long: Ribosomal RNA large subunit methyltransferase F (334 aa).

A disordered region spans residues 1 to 25 (MPRPSSPRPDAERKSASPLHPRNRH).

Belongs to the methyltransferase superfamily. METTL16/RlmF family.

It is found in the cytoplasm. The enzyme catalyses adenosine(1618) in 23S rRNA + S-adenosyl-L-methionine = N(6)-methyladenosine(1618) in 23S rRNA + S-adenosyl-L-homocysteine + H(+). Its function is as follows. Specifically methylates the adenine in position 1618 of 23S rRNA. The sequence is that of Ribosomal RNA large subunit methyltransferase F from Pseudomonas paraeruginosa (strain DSM 24068 / PA7) (Pseudomonas aeruginosa (strain PA7)).